Reading from the N-terminus, the 760-residue chain is Amyloid beta precursor protein binding family B member 2 (760 aa).

Phosphoserine occurs at positions 123 and 160. 2 disordered regions span residues Q177 to G295 and P324 to W351. Composition is skewed to polar residues over residues N212–P230 and S261–P275. The WW domain occupies P290–S322. Phosphoserine is present on residues S334, S409, and S412. PID domains follow at residues D413–D580 and T586–N738.

In terms of assembly, interacts (via C-terminus) with APP (via C-terminus). Interacts with APLP2 (via cytoplasmic domain). In terms of tissue distribution, expressed in the brain, retinal lens and muscle cells (at protein level).

It is found in the endoplasmic reticulum. It localises to the golgi apparatus. The protein resides in the early endosome. Its function is as follows. Plays a role in the maintenance of lens transparency, and may also play a role in muscle cell strength. Involved in hippocampal neurite branching and neuromuscular junction formation, as a result plays a role in spatial memory functioning. Activates transcription of APP. The polypeptide is Amyloid beta precursor protein binding family B member 2 (Mus musculus (Mouse)).